Reading from the N-terminus, the 255-residue chain is Acetylglutamate kinase (255 aa).

Residues 40–41 (GG), arginine 62, and asparagine 153 contribute to the substrate site.

The protein belongs to the acetylglutamate kinase family. ArgB subfamily.

Its subcellular location is the cytoplasm. The catalysed reaction is N-acetyl-L-glutamate + ATP = N-acetyl-L-glutamyl 5-phosphate + ADP. It participates in amino-acid biosynthesis; L-arginine biosynthesis; N(2)-acetyl-L-ornithine from L-glutamate: step 2/4. Catalyzes the ATP-dependent phosphorylation of N-acetyl-L-glutamate. The sequence is that of Acetylglutamate kinase from Bacillus cereus (strain ZK / E33L).